The chain runs to 333 residues: Lipoyl synthase (333 aa).

7 residues coordinate [4Fe-4S] cluster: C56, C61, C67, C82, C86, C89, and S293. One can recognise a Radical SAM core domain in the interval 68-282 (WEDREATFLI…GRVGAELGFS (215 aa)). Positions 301–333 (QQAMTARDQDRSEMSVPPESVSENSHGQRPSPW) are disordered. Residues 314 to 325 (MSVPPESVSENS) show a composition bias toward low complexity.

It belongs to the radical SAM superfamily. Lipoyl synthase family. The cofactor is [4Fe-4S] cluster.

The protein localises to the cytoplasm. The catalysed reaction is [[Fe-S] cluster scaffold protein carrying a second [4Fe-4S](2+) cluster] + N(6)-octanoyl-L-lysyl-[protein] + 2 oxidized [2Fe-2S]-[ferredoxin] + 2 S-adenosyl-L-methionine + 4 H(+) = [[Fe-S] cluster scaffold protein] + N(6)-[(R)-dihydrolipoyl]-L-lysyl-[protein] + 4 Fe(3+) + 2 hydrogen sulfide + 2 5'-deoxyadenosine + 2 L-methionine + 2 reduced [2Fe-2S]-[ferredoxin]. Its pathway is protein modification; protein lipoylation via endogenous pathway; protein N(6)-(lipoyl)lysine from octanoyl-[acyl-carrier-protein]: step 2/2. Catalyzes the radical-mediated insertion of two sulfur atoms into the C-6 and C-8 positions of the octanoyl moiety bound to the lipoyl domains of lipoate-dependent enzymes, thereby converting the octanoylated domains into lipoylated derivatives. This Frankia casuarinae (strain DSM 45818 / CECT 9043 / HFP020203 / CcI3) protein is Lipoyl synthase.